Consider the following 320-residue polypeptide: Malate dehydrogenase (320 aa).

Residues 10–15 (GAGQIG) and D34 each bind NAD(+). The substrate site is built by R83 and R89. NAD(+) is bound by residues N96 and 119–121 (ITN). N121 and R152 together coordinate substrate. Catalysis depends on H176, which acts as the Proton acceptor.

It belongs to the LDH/MDH superfamily. MDH type 3 family.

The catalysed reaction is (S)-malate + NAD(+) = oxaloacetate + NADH + H(+). Its function is as follows. Catalyzes the reversible oxidation of malate to oxaloacetate. The polypeptide is Malate dehydrogenase (Methylorubrum populi (strain ATCC BAA-705 / NCIMB 13946 / BJ001) (Methylobacterium populi)).